A 471-amino-acid polypeptide reads, in one-letter code: Ribulose bisphosphate carboxylase large chain 2 (471 aa).

Substrate-binding residues include Asn116 and Thr166. Lys168 functions as the Proton acceptor in the catalytic mechanism. A substrate-binding site is contributed by Lys170. Positions 194, 196, and 197 each coordinate Mg(2+). Lys194 carries the post-translational modification N6-carboxylysine. The active-site Proton acceptor is His287. Substrate-binding residues include Arg288, His320, and Ser372.

Belongs to the RuBisCO large chain family. Type I subfamily. As to quaternary structure, heterohexadecamer of 8 large chains and 8 small chains. Forms a CsoS2-CsoS1-RuBisCO complex. Mg(2+) is required as a cofactor.

It localises to the carboxysome. It catalyses the reaction 2 (2R)-3-phosphoglycerate + 2 H(+) = D-ribulose 1,5-bisphosphate + CO2 + H2O. The catalysed reaction is D-ribulose 1,5-bisphosphate + O2 = 2-phosphoglycolate + (2R)-3-phosphoglycerate + 2 H(+). Its function is as follows. RuBisCO catalyzes two reactions: the carboxylation of D-ribulose 1,5-bisphosphate, the primary event in carbon dioxide fixation, as well as the oxidative fragmentation of the pentose substrate. Both reactions occur simultaneously and in competition at the same active site. Replacing the endogenous type I ccbLS genes in H.neapolitanus with this carboxysomally targeted enzyme reconstitutes RuBisCO with about 25% of normal activity; the active enzyme is targeted to carboxysomes. The protein is Ribulose bisphosphate carboxylase large chain 2 of Hydrogenovibrio crunogenus (strain DSM 25203 / XCL-2) (Thiomicrospira crunogena).